The sequence spans 394 residues: Acetyl-CoA acetyltransferase (394 aa).

Residue C89 is the Acyl-thioester intermediate of the active site. Active-site proton acceptor residues include H350 and C380.

Belongs to the thiolase-like superfamily. Thiolase family. As to quaternary structure, homotetramer.

Its subcellular location is the cytoplasm. It catalyses the reaction 2 acetyl-CoA = acetoacetyl-CoA + CoA. It functions in the pathway biopolymer metabolism; poly-(R)-3-hydroxybutanoate biosynthesis. The protein operates within metabolic intermediate biosynthesis; (R)-mevalonate biosynthesis; (R)-mevalonate from acetyl-CoA: step 1/3. The protein is Acetyl-CoA acetyltransferase of Thiocystis violacea.